We begin with the raw amino-acid sequence, 382 residues long: MLKVLISAGEASGEMYGAALLDALRKLSPDPVEAFGLGGEKMRAAGCDIIVDSKDVAVVGIAEVVAHLPRIYGEFHKLLREADRRKPDVAVLIDFPDFHFRLAKALHARGIPVVYYVSPQLWAWRRGRIKLVQRYVKKMLVIFPFEEQFYREHNVEAEFTGHPLGELSVTVDPRTEFAVRYGLDPAKPWVGILPGSRRKEVQMILPTLIDAAKKLGPANEYLLPVASTLDAGWMQAQLLAIPQPPRVTLTSDARQTLVQSRAAMVASGTATVEASVLGTPFVMVYRVAPLSWRVGRRLVKLDRFAMPNLIAGREVVRELVQENFTADKVAAEVSALIEDGPRRAQVLKNLAEVREHLQSGRTNESAAERAARSVLSVAQRKD.

This sequence belongs to the LpxB family.

The catalysed reaction is a lipid X + a UDP-2-N,3-O-bis[(3R)-3-hydroxyacyl]-alpha-D-glucosamine = a lipid A disaccharide + UDP + H(+). It participates in bacterial outer membrane biogenesis; LPS lipid A biosynthesis. Condensation of UDP-2,3-diacylglucosamine and 2,3-diacylglucosamine-1-phosphate to form lipid A disaccharide, a precursor of lipid A, a phosphorylated glycolipid that anchors the lipopolysaccharide to the outer membrane of the cell. In Koribacter versatilis (strain Ellin345), this protein is Lipid-A-disaccharide synthase.